The sequence spans 101 residues: Small ribosomal subunit protein bS18c (101 aa).

A compositionally biased stretch (basic residues) spans 1-19; sequence MNKSKRPFTKSKRSFRRRL. Residues 1-20 are disordered; sequence MNKSKRPFTKSKRSFRRRLP.

Belongs to the bacterial ribosomal protein bS18 family. Part of the 30S ribosomal subunit.

It localises to the plastid. Its subcellular location is the chloroplast. This chain is Small ribosomal subunit protein bS18c, found in Arabis hirsuta (Hairy rock-cress).